The chain runs to 238 residues: tRNA (guanine-N(1)-)-methyltransferase (238 aa).

S-adenosyl-L-methionine-binding positions include Gly-110 and 129-134 (LGDFIL).

It belongs to the RNA methyltransferase TrmD family. Homodimer.

It is found in the cytoplasm. It catalyses the reaction guanosine(37) in tRNA + S-adenosyl-L-methionine = N(1)-methylguanosine(37) in tRNA + S-adenosyl-L-homocysteine + H(+). Its function is as follows. Specifically methylates guanosine-37 in various tRNAs. The sequence is that of tRNA (guanine-N(1)-)-methyltransferase from Clostridium botulinum (strain Alaska E43 / Type E3).